Here is a 315-residue protein sequence, read N- to C-terminus: Calumenin (315 aa).

Positions 1–19 are cleaved as a signal peptide; sequence MDLRQFLMCLSLCTAFALS. S44 is subject to Phosphoserine. Residue Y47 is modified to Phosphotyrosine. T65 bears the Phosphothreonine mark. EF-hand domains lie at 68–103, 104–139, 151–186, 188–223, 229–264, and 265–300; these read ESKE…AQKK, YIYD…TYLD, QMMV…EEYD, MKDI…HDGN, WVKT…SDYD, and HAEA…FVGS. Residue S69 is modified to Phosphoserine. Residues D81, D83, D85, E92, D117, N119, D121, and E128 each coordinate Ca(2+). N-linked (GlcNAc...) asparagine glycosylation is present at N131. Ca(2+) is bound at residue D164. Position 165 is an N6-acetyllysine (K165). Ca(2+) is bound by residues D166, D168, E175, D201, N203, D205, E212, D242, N244, D246, K248, and E253. T254 bears the Phosphothreonine mark. Residues S261 and S277 each carry the phosphoserine modification. Positions 278, 280, 282, 284, and 289 each coordinate Ca(2+). Residues 312–315 carry the Prevents secretion from ER motif; it reads HDEF.

Belongs to the CREC family. Interacts with GGCX.

Its subcellular location is the endoplasmic reticulum membrane. It is found in the golgi apparatus. The protein resides in the secreted. The protein localises to the melanosome. It localises to the sarcoplasmic reticulum lumen. Its function is as follows. Involved in regulation of vitamin K-dependent carboxylation of multiple N-terminal glutamate residues. Seems to inhibit gamma-carboxylase GGCX. Binds 7 calcium ions with a low affinity. In Bos taurus (Bovine), this protein is Calumenin (CALU).